The following is a 184-amino-acid chain: Major fimbrial subunit (184 aa).

Positions 1–22 (MKLSKIALAAALVFGINSVATA) are cleaved as a signal peptide. Residues C49 and C88 are joined by a disulfide bond.

It belongs to the fimbrial protein family.

The protein resides in the fimbrium. Its function is as follows. Major structural component of PMF fimbriae. The chain is Major fimbrial subunit (pmfA) from Proteus mirabilis (strain HI4320).